Consider the following 71-residue polypeptide: Plasticin-C1 (71 aa).

The signal sequence occupies residues 1–22 (MAFLKKSLLLVLFLGLVSLSIC). Residues 23–45 (EEEKRENEDEEKQEDDDQSENKR) constitute a propeptide that is removed on maturation. The segment at 25–46 (EKRENEDEEKQEDDDQSENKRG) is disordered. Positions 30 to 40 (EDEEKQEDDDQ) are enriched in acidic residues. Asparagine 68 bears the Asparagine amide mark. The propeptide occupies 70 to 71 (ES).

This sequence belongs to the frog skin active peptide (FSAP) family. Plasticin subfamily. As to expression, expressed by the skin glands.

Its subcellular location is the secreted. The protein resides in the target cell membrane. Functionally, neutral peptide with no antimicrobial activity. May act in synergy with cationic peptides by enhancing their activity. Has a moderate hemolytic activity. This is Plasticin-C1 from Agalychnis callidryas (Red-eyed tree frog).